A 956-amino-acid polypeptide reads, in one-letter code: Probable hypoxanthine oxidase XdhD (956 aa).

Mo-molybdopterin-binding residues include glutamine 414, phenylalanine 445, and alanine 727.

This sequence belongs to the xanthine dehydrogenase family. The cofactor is [2Fe-2S] cluster. Requires Mo-molybdopterin as cofactor.

Its function is as follows. Probably has no xanthine dehydrogenase activity; however deletion results in increased adenine sensitivity, suggesting that this protein contributes to the conversion of adenine to guanine nucleotides during purine salvage. This is Probable hypoxanthine oxidase XdhD (xdhD) from Escherichia coli (strain K12).